The chain runs to 289 residues: Protoheme IX farnesyltransferase (289 aa).

The next 9 helical transmembrane spans lie at 13 to 33 (LIKPRVTSLVLATIIPGLYLA), 40 to 60 (VFLITVTLFGTFLMSSASFIF), 85 to 105 (ISIPQATLVGISMMGLSFYML), 111 to 131 (LLTALCALTALISYVFLYTIF), 139 to 159 (NIVIGGVAGCVGPLIGYAAIG), 168 to 188 (ILFTMIFLWTPAHFWALAIFL), 212 to 232 (SIFFYTILYSLSCVSFYFLEP), 234 to 254 (MGLLYLVIVLLVCIWMGILSY), and 269 to 289 (FLFSIFHLFLINITIVVDHMI).

Belongs to the UbiA prenyltransferase family. Protoheme IX farnesyltransferase subfamily.

It localises to the cell inner membrane. It catalyses the reaction heme b + (2E,6E)-farnesyl diphosphate + H2O = Fe(II)-heme o + diphosphate. It participates in porphyrin-containing compound metabolism; heme O biosynthesis; heme O from protoheme: step 1/1. Functionally, converts heme B (protoheme IX) to heme O by substitution of the vinyl group on carbon 2 of heme B porphyrin ring with a hydroxyethyl farnesyl side group. The polypeptide is Protoheme IX farnesyltransferase (Leptospira borgpetersenii serovar Hardjo-bovis (strain JB197)).